The following is a 117-amino-acid chain: Large ribosomal subunit protein bL20 (117 aa).

This sequence belongs to the bacterial ribosomal protein bL20 family.

Binds directly to 23S ribosomal RNA and is necessary for the in vitro assembly process of the 50S ribosomal subunit. It is not involved in the protein synthesizing functions of that subunit. The chain is Large ribosomal subunit protein bL20 from Campylobacter hominis (strain ATCC BAA-381 / DSM 21671 / CCUG 45161 / LMG 19568 / NCTC 13146 / CH001A).